We begin with the raw amino-acid sequence, 1263 residues long: Kinesin-like protein KIN-12E (1263 aa).

Residues 21 to 44 are disordered; that stretch reads PAPSESLRSVPCTPEANTVSRDNH. Residues 35–44 show a composition bias toward polar residues; sequence EANTVSRDNH. The 338-residue stretch at 93 to 430 folds into the Kinesin motor domain; it reads NVQVIIRTRP…LKFAQRAKLI (338 aa). An ATP-binding site is contributed by 174–181; sequence GQTGSGKT. Coiled-coil stretches lie at residues 679–737, 764–805, 831–881, 905–966, 1091–1168, and 1193–1251; these read SKKL…KIRS, AEAH…AEEN, ALEV…KRLL, SEKS…HQSE, TDLL…TIQE, and LRKE…VLSL.

This sequence belongs to the TRAFAC class myosin-kinesin ATPase superfamily. Kinesin family. KIN-12 subfamily.

The polypeptide is Kinesin-like protein KIN-12E (Arabidopsis thaliana (Mouse-ear cress)).